Reading from the N-terminus, the 92-residue chain is Small ribosomal subunit protein bS20 (92 aa).

A compositionally biased stretch (basic and acidic residues) spans 1 to 21 (MPLHKSAEKRLRQAARRNERN). Disordered stretches follow at residues 1-26 (MPLH…ARKK) and 73-92 (ASRK…PTAS). A compositionally biased stretch (polar residues) spans 82–92 (KALNNYTPTAS).

It belongs to the bacterial ribosomal protein bS20 family.

Its function is as follows. Binds directly to 16S ribosomal RNA. This chain is Small ribosomal subunit protein bS20, found in Chlorobaculum tepidum (strain ATCC 49652 / DSM 12025 / NBRC 103806 / TLS) (Chlorobium tepidum).